We begin with the raw amino-acid sequence, 429 residues long: UDP-N-acetylglucosamine 1-carboxyvinyltransferase 2 (429 aa).

22–23 lines the phosphoenolpyruvate pocket; it reads KN. Arginine 93 contacts UDP-N-acetyl-alpha-D-glucosamine. Cysteine 117 (proton donor) is an active-site residue. Cysteine 117 is modified (2-(S-cysteinyl)pyruvic acid O-phosphothioketal). UDP-N-acetyl-alpha-D-glucosamine is bound by residues 122-126, aspartate 305, and isoleucine 327; that span reads RPIDQ.

The protein belongs to the EPSP synthase family. MurA subfamily.

The protein localises to the cytoplasm. It catalyses the reaction phosphoenolpyruvate + UDP-N-acetyl-alpha-D-glucosamine = UDP-N-acetyl-3-O-(1-carboxyvinyl)-alpha-D-glucosamine + phosphate. It functions in the pathway cell wall biogenesis; peptidoglycan biosynthesis. In terms of biological role, cell wall formation. Adds enolpyruvyl to UDP-N-acetylglucosamine. This Bacillus anthracis protein is UDP-N-acetylglucosamine 1-carboxyvinyltransferase 2.